The primary structure comprises 684 residues: MSLLSADALGLLLKNAISASSMRLGRVVHARIVKTLDSPPPPFLANYLINMYSKLDHPESARLVLRLTPARNVVSWTSLISGLAQNGHFSTALVEFFEMRREGVVPNDFTFPCAFKAVASLRLPVTGKQIHALAVKCGRILDVFVGCSAFDMYCKTRLRDDARKLFDEIPERNLETWNAFISNSVTDGRPREAIEAFIEFRRIDGHPNSITFCAFLNACSDWLHLNLGMQLHGLVLRSGFDTDVSVCNGLIDFYGKCKQIRSSEIIFTEMGTKNAVSWCSLVAAYVQNHEDEKASVLYLRSRKDIVETSDFMISSVLSACAGMAGLELGRSIHAHAVKACVERTIFVGSALVDMYGKCGCIEDSEQAFDEMPEKNLVTRNSLIGGYAHQGQVDMALALFEEMAPRGCGPTPNYMTFVSLLSACSRAGAVENGMKIFDSMRSTYGIEPGAEHYSCIVDMLGRAGMVERAYEFIKKMPIQPTISVWGALQNACRMHGKPQLGLLAAENLFKLDPKDSGNHVLLSNTFAAAGRWAEANTVREELKGVGIKKGAGYSWITVKNQVHAFQAKDRSHILNKEIQTTLAKLRNEMEAAGYKPDLKLSLYDLEEEEKAAEVSHHSEKLALAFGLLSLPLSVPIRITKNLRICGDCHSFFKFVSGSVKREIIVRDNNRFHRFKDGICSCKDYW.

PPR repeat units follow at residues Ser5–Pro39, Pro41–Arg71, Asn72–Pro106, Asn107–Leu141, Asp142–Arg172, Asn173–Pro207, Asn208–Thr242, Asp243–Ser277, Trp278–Thr308, Ser309–Arg343, Thr344–Lys374, Asn375–Pro409, Asn412–Thr442, and Gly448–Gln478. A type E motif; degenerate region spans residues Val483 to Lys558. The interval Asn559–Glu589 is type E(+) motif; degenerate. Residues Ala590–Trp684 are type DYW motif.

It belongs to the PPR family. PCMP-H subfamily.

In terms of biological role, acts as a regulatory factor of isoprenoid biosynthesis. Could bind RNA. This chain is Pentatricopeptide repeat-containing protein At4g14850 (LOI1), found in Arabidopsis thaliana (Mouse-ear cress).